The sequence spans 242 residues: 4-hydroxy-tetrahydrodipicolinate reductase (242 aa).

NAD(+)-binding positions include 8 to 13, 75 to 77, and 99 to 102; these read GSNGRM, GTT, and ATNM. The active-site Proton donor/acceptor is His131. A (S)-2,3,4,5-tetrahydrodipicolinate-binding site is contributed by His132. Residue Lys135 is the Proton donor of the active site. Residue 141 to 142 coordinates (S)-2,3,4,5-tetrahydrodipicolinate; it reads GT.

The protein belongs to the DapB family.

The protein localises to the cytoplasm. It carries out the reaction (S)-2,3,4,5-tetrahydrodipicolinate + NAD(+) + H2O = (2S,4S)-4-hydroxy-2,3,4,5-tetrahydrodipicolinate + NADH + H(+). The enzyme catalyses (S)-2,3,4,5-tetrahydrodipicolinate + NADP(+) + H2O = (2S,4S)-4-hydroxy-2,3,4,5-tetrahydrodipicolinate + NADPH + H(+). Its pathway is amino-acid biosynthesis; L-lysine biosynthesis via DAP pathway; (S)-tetrahydrodipicolinate from L-aspartate: step 4/4. In terms of biological role, catalyzes the conversion of 4-hydroxy-tetrahydrodipicolinate (HTPA) to tetrahydrodipicolinate. In Campylobacter lari (strain RM2100 / D67 / ATCC BAA-1060), this protein is 4-hydroxy-tetrahydrodipicolinate reductase.